The following is a 127-amino-acid chain: Fluoride-specific ion channel FluC (127 aa).

4 helical membrane-spanning segments follow: residues 4–24 (LLLAVFIGGGTGSVARWLLSM), 35–55 (LGTLAANLIGAFIIGMGFAWF), 71–91 (TGFCGGLTTFSTFSAEVVFLL), and 103–123 (VFVNLLGSFAMTALAFWLFSA). Residues Gly75 and Thr78 each contribute to the Na(+) site.

This sequence belongs to the fluoride channel Fluc/FEX (TC 1.A.43) family.

Its subcellular location is the cell inner membrane. It carries out the reaction fluoride(in) = fluoride(out). With respect to regulation, na(+) is not transported, but it plays an essential structural role and its presence is essential for fluoride channel function. Functionally, fluoride-specific ion channel. Important for reducing fluoride concentration in the cell, thus reducing its toxicity. In Escherichia coli O81 (strain ED1a), this protein is Fluoride-specific ion channel FluC.